Consider the following 83-residue polypeptide: High-potential iron-sulfur protein (83 aa).

The [4Fe-4S] cluster site is built by C43, C46, C61, and C75.

Belongs to the high-potential iron-sulfur protein (HiPIP) family. In terms of assembly, homodimer.

The protein localises to the periplasm. Specific class of high-redox-potential 4Fe-4S ferredoxins. Functions in anaerobic electron transport in most purple and in some other photosynthetic bacteria and in at least one genus (Paracoccus) of halophilic, denitrifying bacteria. This Isochromatium buderi (Chromatium buderi) protein is High-potential iron-sulfur protein.